A 147-amino-acid polypeptide reads, in one-letter code: MESPRIHGGAEEKSSCESGWTMYIEDTFHGNHHSEVVYEEEDDGFSVKEVDDDGDGDEDDDDDDDDDSSNNESDDSMTSDASSWPSTHQPPRSTKNHAAAKNSNAKQVNNQTENRVRDRFSDEGEESELKARTRTTAASRVKVSKTK.

The SOFL-A signature appears at 18–23 (SGWTMY). The interval 32 to 147 (HHSEVVYEEE…ASRVKVSKTK (116 aa)) is disordered. A compositionally biased stretch (acidic residues) spans 37-77 (VYEEEDDGFSVKEVDDDGDGDEDDDDDDDDDSSNNESDDSM). The short motif at 76 to 85 (SMTSDASSWP) is the SOFL-B element. Polar residues predominate over residues 78 to 93 (TSDASSWPSTHQPPRS). Positions 96 to 106 (NHAAAKNSNAK) are enriched in low complexity. Residues 114–131 (NRVRDRFSDEGEESELKA) show a composition bias toward basic and acidic residues.

This sequence belongs to the SOFL plant protein family. As to expression, predominantly expressed in the vascular tissues of seedlings, developing leaves, flowers and siliques, but barely detectable in roots and stems.

It is found in the cytoplasm. The protein resides in the nucleus. Functionally, involved in cytokinin-mediated development. Together with SOFL2, triggers the endogenous content of specific bioactive cytokinins derived from the biosynthetic intermediates trans-zeatin riboside monophosphate (tZRMP) and N(6)-(Delta(2)-isopentenyl)adenosine monophosphate (iPRMP) such as N-glucosides trans-zeatin 7-glucoside (tZ7G), cis-zeatin 7-glucoside (cZ7G) and N(6)-(Delta(2)-isopentenyl)adenine 7-glucoside (iP7G). This is Protein SOB FIVE-LIKE 2 from Arabidopsis thaliana (Mouse-ear cress).